The primary structure comprises 416 residues: Serine hydroxymethyltransferase (416 aa).

Residues L121 and 125 to 127 (GHL) contribute to the (6S)-5,6,7,8-tetrahydrofolate site. The residue at position 229 (K229) is an N6-(pyridoxal phosphate)lysine.

This sequence belongs to the SHMT family. As to quaternary structure, homodimer. It depends on pyridoxal 5'-phosphate as a cofactor.

The protein localises to the cytoplasm. The catalysed reaction is (6R)-5,10-methylene-5,6,7,8-tetrahydrofolate + glycine + H2O = (6S)-5,6,7,8-tetrahydrofolate + L-serine. The protein operates within one-carbon metabolism; tetrahydrofolate interconversion. It functions in the pathway amino-acid biosynthesis; glycine biosynthesis; glycine from L-serine: step 1/1. In terms of biological role, catalyzes the reversible interconversion of serine and glycine with tetrahydrofolate (THF) serving as the one-carbon carrier. This reaction serves as the major source of one-carbon groups required for the biosynthesis of purines, thymidylate, methionine, and other important biomolecules. Also exhibits THF-independent aldolase activity toward beta-hydroxyamino acids, producing glycine and aldehydes, via a retro-aldol mechanism. The sequence is that of Serine hydroxymethyltransferase from Aromatoleum aromaticum (strain DSM 19018 / LMG 30748 / EbN1) (Azoarcus sp. (strain EbN1)).